Reading from the N-terminus, the 423-residue chain is Dihydroorotase-like protein (423 aa).

Belongs to the metallo-dependent hydrolases superfamily. DHOase family. PyrC' subfamily. As to quaternary structure, heterododecamer of 6 active PyrB subunits and 6 non-catalytic PyrC' subunits.

In terms of biological role, non-functional DHOase. The protein is Dihydroorotase-like protein (pyrC') of Pseudomonas aeruginosa (strain ATCC 15692 / DSM 22644 / CIP 104116 / JCM 14847 / LMG 12228 / 1C / PRS 101 / PAO1).